Consider the following 511-residue polypeptide: FAD-dependent monooxygenase AOL_s00215g279 (511 aa).

The first 17 residues, 1 to 17 (MRFTLYGLLGFASLLHA), serve as a signal peptide directing secretion. Residues 85–256 (CWVNPACIVS…TEFDLRTRYS (172 aa)) enclose the FAD-binding PCMH-type domain. His122 is subject to Pros-8alpha-FAD histidine.

Belongs to the oxygen-dependent FAD-linked oxidoreductase family.

Its pathway is secondary metabolite biosynthesis; terpenoid biosynthesis. Functionally, FAD-dependent monooxygenase; part of the gene cluster that mediates the biosynthesis of sesquiterpenyl epoxy-cyclohexenoids (SECs) such as anthrobotrisins and arthrosporols, metabolites that possess a novel hybrid carbon skeleton consisting of a polyketide-derived epoxycyclohexenol combined with a terpenoid-derived monocyclic sesquiterpenol substructure (PKS-PTS hybrid). The SEC pathway plays an important role for fungal soil colonization via decreasing fungal nematode-capturing ability. Within the pathway, the FAD-dependent monooxygenase AOL_s00215g279 plays a role in the oxygenation of the phenol moiety, most likely in the epoxy formation. The pathway begins with the biosynthesis of 6-methylsalicylic acid (6-MSA), the first precursor of the polyketide-derived epoxycyclohexenol in arthrosporols, by the polyketide synthase (PKS) AOL_s00215g283 via condensation of 1 acetate and 3 malonate units. The 6-methylsalicylic acid decarboxylase AOL_s00215g281 then catalyzes the decarboxylation of 6-methylsalicylic acid to yield m-cresol. The cytochrome P450 monooxygenase AOL_s00215g282 further oxidizes m-cresol to yield toluquinol. With the assistance of the oxidoreductase AOL_s00215g277, the polyprenyl transferase AOL_s00215g276 catalyzes the farnesylation of toluquinol to produce farnesyl hydroquinone, the hybrid precursor for biosynthesis of SECs. Farnesyl hydroquinone undergoes epoxidation and then subsequent dehydrogenation to form farnesyl epoxy-quinone, the first and simplest SEC. The cytochrome P450 monooxygenase AOL_s00215g278 and the FAD-dependent monooxygenase AOL_s00215g279 might be involved in the oxygenation of the phenol moiety, most likely in the epoxy formation. The cytochrome P450 monooxygenases AOL_s00215g274 and AOL_s00215g280 are involved in specific regional ketone reductions at respectively C-4 and C-1 of farnesyl epoxy-quinone PubMed:33823587. The protein is FAD-dependent monooxygenase AOL_s00215g279 of Arthrobotrys oligospora (strain ATCC 24927 / CBS 115.81 / DSM 1491) (Nematode-trapping fungus).